A 268-amino-acid polypeptide reads, in one-letter code: Tryptophan synthase alpha chain (268 aa).

Active-site proton acceptor residues include glutamate 49 and aspartate 60.

It belongs to the TrpA family. In terms of assembly, tetramer of two alpha and two beta chains.

It catalyses the reaction (1S,2R)-1-C-(indol-3-yl)glycerol 3-phosphate + L-serine = D-glyceraldehyde 3-phosphate + L-tryptophan + H2O. The protein operates within amino-acid biosynthesis; L-tryptophan biosynthesis; L-tryptophan from chorismate: step 5/5. Functionally, the alpha subunit is responsible for the aldol cleavage of indoleglycerol phosphate to indole and glyceraldehyde 3-phosphate. The protein is Tryptophan synthase alpha chain of Salmonella agona (strain SL483).